We begin with the raw amino-acid sequence, 233 residues long: Putative cobalt transport protein CbiM (233 aa).

The next 6 helical transmembrane spans lie at 9–29 (PPMW…YGIV), 43–63 (PLVA…MPSV), 75–95 (LGAV…VLLF), 107–127 (TLGA…VIVY), 138–158 (TVGI…TTAV), and 177–197 (IVIY…LTVI).

Belongs to the CbiM family. Forms an energy-coupling factor (ECF) transporter complex composed of an ATP-binding protein (A component, CbiO), a transmembrane protein (T component, CbiQ) and 2 possible substrate-capture proteins (S components, CbiM and CbiN) of unknown stoichimetry.

The protein resides in the cell membrane. Its pathway is cofactor biosynthesis; adenosylcobalamin biosynthesis. In terms of biological role, part of the energy-coupling factor (ECF) transporter complex CbiMNOQ involved in cobalt import. The chain is Putative cobalt transport protein CbiM from Methanocaldococcus jannaschii (strain ATCC 43067 / DSM 2661 / JAL-1 / JCM 10045 / NBRC 100440) (Methanococcus jannaschii).